Consider the following 321-residue polypeptide: tRNA 2-thiolation protein NcsA (321 aa).

K204 participates in a covalent cross-link: Glycyl lysine isopeptide (Lys-Gly) (interchain with G-Cter in SAMP2).

It belongs to the TtcA family. CTU1/NCS6/ATPBD3 subfamily. In terms of assembly, interacts with monomeric and polymeric forms of SAMP2. Interacts with UbaA. Interacts with archaeal EF-1-alpha and Pan1. Non-sampylated protein forms a complex with archaeal CPSF1 of approximately 100 kDa. In terms of processing, sampylated at Lys-204 with the archaeal ubiquitin-like protein SAMP2. Polymeric chains of SAMP2 are also linked.

It functions in the pathway tRNA modification; 5-methoxycarbonylmethyl-2-thiouridine-tRNA biosynthesis. Its function is as follows. Required for thiolation of mcm(5)S(2)U at the wobble uridine position of tRNA specific for lysine (tRNA(Lys)). Probably acts by catalyzing adenylation of tRNA, an intermediate required for 2-thiolation. May also act as a sulfurtransferase that transfers sulfur from thiocarboxylated SAMP2 onto the uridine of tRNA at wobble position. Required for cell growth at elevated temperatures. The chain is tRNA 2-thiolation protein NcsA from Haloferax volcanii (strain ATCC 29605 / DSM 3757 / JCM 8879 / NBRC 14742 / NCIMB 2012 / VKM B-1768 / DS2) (Halobacterium volcanii).